Here is a 343-residue protein sequence, read N- to C-terminus: Holliday junction branch migration complex subunit RuvB (343 aa).

Residues 1–185 form a large ATPase domain (RuvB-L) region; that stretch reads MMNENLDATG…FGISSRLQYY (185 aa). Residues Leu24, Arg25, Gly66, Lys69, Thr70, Thr71, 132 to 134, Arg175, Tyr185, and Arg222 contribute to the ATP site; that span reads EDY. Thr70 is a Mg(2+) binding site. A small ATPAse domain (RuvB-S) region spans residues 186–256; the sequence is STELLSGIVE…IAKFGLKALN (71 aa). The segment at 259-343 is head domain (RuvB-H); the sequence is AHGLDEMDNK…GSNQGGLFDN (85 aa). 2 residues coordinate DNA: Arg314 and Arg319.

The protein belongs to the RuvB family. As to quaternary structure, homohexamer. Forms an RuvA(8)-RuvB(12)-Holliday junction (HJ) complex. HJ DNA is sandwiched between 2 RuvA tetramers; dsDNA enters through RuvA and exits via RuvB. An RuvB hexamer assembles on each DNA strand where it exits the tetramer. Each RuvB hexamer is contacted by two RuvA subunits (via domain III) on 2 adjacent RuvB subunits; this complex drives branch migration. In the full resolvosome a probable DNA-RuvA(4)-RuvB(12)-RuvC(2) complex forms which resolves the HJ.

It is found in the cytoplasm. It carries out the reaction ATP + H2O = ADP + phosphate + H(+). The RuvA-RuvB-RuvC complex processes Holliday junction (HJ) DNA during genetic recombination and DNA repair, while the RuvA-RuvB complex plays an important role in the rescue of blocked DNA replication forks via replication fork reversal (RFR). RuvA specifically binds to HJ cruciform DNA, conferring on it an open structure. The RuvB hexamer acts as an ATP-dependent pump, pulling dsDNA into and through the RuvAB complex. RuvB forms 2 homohexamers on either side of HJ DNA bound by 1 or 2 RuvA tetramers; 4 subunits per hexamer contact DNA at a time. Coordinated motions by a converter formed by DNA-disengaged RuvB subunits stimulates ATP hydrolysis and nucleotide exchange. Immobilization of the converter enables RuvB to convert the ATP-contained energy into a lever motion, pulling 2 nucleotides of DNA out of the RuvA tetramer per ATP hydrolyzed, thus driving DNA branch migration. The RuvB motors rotate together with the DNA substrate, which together with the progressing nucleotide cycle form the mechanistic basis for DNA recombination by continuous HJ branch migration. Branch migration allows RuvC to scan DNA until it finds its consensus sequence, where it cleaves and resolves cruciform DNA. The chain is Holliday junction branch migration complex subunit RuvB from Christiangramia forsetii (strain DSM 17595 / CGMCC 1.15422 / KT0803) (Gramella forsetii).